The following is a 432-amino-acid chain: UDP-N-acetylglucosamine 1-carboxyvinyltransferase (432 aa).

22–23 (KN) lines the phosphoenolpyruvate pocket. Arg96 contacts UDP-N-acetyl-alpha-D-glucosamine. Catalysis depends on Cys120, which acts as the Proton donor. Cys120 is modified (2-(S-cysteinyl)pyruvic acid O-phosphothioketal). Residues 125–129 (RPVDL), Asp310, and Ile332 each bind UDP-N-acetyl-alpha-D-glucosamine.

It belongs to the EPSP synthase family. MurA subfamily.

It is found in the cytoplasm. The enzyme catalyses phosphoenolpyruvate + UDP-N-acetyl-alpha-D-glucosamine = UDP-N-acetyl-3-O-(1-carboxyvinyl)-alpha-D-glucosamine + phosphate. The protein operates within cell wall biogenesis; peptidoglycan biosynthesis. In terms of biological role, cell wall formation. Adds enolpyruvyl to UDP-N-acetylglucosamine. The chain is UDP-N-acetylglucosamine 1-carboxyvinyltransferase from Caulobacter sp. (strain K31).